Consider the following 934-residue polypeptide: ATP-dependent RNA helicase dbp-10 (934 aa).

The tract at residues 21–43 (LFNNDSDFEDNSSKHHTKKGAVT) is disordered. Positions 99–127 (GGFQAMGLNAHLLRAITRKGFSVPTPIQR) match the Q motif motif. Positions 130–302 (IPLILERKDV…RAGLQEPSLV (173 aa)) constitute a Helicase ATP-binding domain. 143 to 150 (ARTGSGKT) lines the ATP pocket. The DEAD box motif lies at 250 to 253 (DEAD). Disordered regions lie at residues 343-370 (GPPEGTKEESDELQARKRKREYRPNPKE), 613-722 (ELGP…FQDP), and 851-934 (GAQP…RQKR). In terms of domain architecture, Helicase C-terminal spans 359 to 513 (KRKREYRPNP…KNPSFAADVV (155 aa)). Composition is skewed to acidic residues over residues 644 to 654 (DEDDEDVDMED) and 662 to 700 (EETNAFEDFEDEEEEGEAEEAEEAEAKEDPYADDSDSEM). A compositionally biased stretch (basic and acidic residues) spans 864–926 (EKAPKDADKF…VAEKKREKNA (63 aa)).

The protein belongs to the DEAD box helicase family. DDX54/DBP10 subfamily.

It is found in the nucleus. It localises to the nucleolus. The enzyme catalyses ATP + H2O = ADP + phosphate + H(+). ATP-binding RNA helicase involved in the biogenesis of 60S ribosomal subunits and is required for the normal formation of 25S and 5.8S rRNAs. The polypeptide is ATP-dependent RNA helicase dbp-10 (dbp-10) (Neurospora crassa (strain ATCC 24698 / 74-OR23-1A / CBS 708.71 / DSM 1257 / FGSC 987)).